Consider the following 207-residue polypeptide: Large ribosomal subunit protein uL3c (207 aa).

The segment at 115–151 is disordered; the sequence is IGKGFAGNQKRHNFSRGPMTHGSKNHRLPGSIGAGST.

The protein belongs to the universal ribosomal protein uL3 family. As to quaternary structure, part of the 50S ribosomal subunit.

Its subcellular location is the plastid. The protein resides in the chloroplast. One of the primary rRNA binding proteins, it binds directly near the 3'-end of the 23S rRNA, where it nucleates assembly of the 50S subunit. This chain is Large ribosomal subunit protein uL3c (rpl3), found in Emiliania huxleyi (Coccolithophore).